The primary structure comprises 288 residues: Acetyl-coenzyme A carboxylase carboxyl transferase subunit beta (288 aa).

Residues 34–288 (LFAKCPGCKQ…TLLSFHGGVQ (255 aa)) enclose the CoA carboxyltransferase N-terminal domain. Zn(2+) is bound by residues cysteine 38, cysteine 41, cysteine 56, and cysteine 59. A C4-type zinc finger spans residues 38-59 (CPGCKQAIYQKDLGQAKICPNC).

Belongs to the AccD/PCCB family. In terms of assembly, acetyl-CoA carboxylase is a heterohexamer composed of biotin carboxyl carrier protein (AccB), biotin carboxylase (AccC) and two subunits each of ACCase subunit alpha (AccA) and ACCase subunit beta (AccD). Zn(2+) is required as a cofactor.

It is found in the cytoplasm. The catalysed reaction is N(6)-carboxybiotinyl-L-lysyl-[protein] + acetyl-CoA = N(6)-biotinyl-L-lysyl-[protein] + malonyl-CoA. It functions in the pathway lipid metabolism; malonyl-CoA biosynthesis; malonyl-CoA from acetyl-CoA: step 1/1. In terms of biological role, component of the acetyl coenzyme A carboxylase (ACC) complex. Biotin carboxylase (BC) catalyzes the carboxylation of biotin on its carrier protein (BCCP) and then the CO(2) group is transferred by the transcarboxylase to acetyl-CoA to form malonyl-CoA. The chain is Acetyl-coenzyme A carboxylase carboxyl transferase subunit beta from Streptococcus thermophilus (strain CNRZ 1066).